A 576-amino-acid polypeptide reads, in one-letter code: Vesicular glutamate transporter 1 (576 aa).

The Cytoplasmic segment spans residues 1–63; sequence MEFRKEEFKK…CTCFGLPRRY (63 aa). Residues 64–84 traverse the membrane as a helical segment; that stretch reads IIAIMSGLGFCISFGIRCNLG. Over 85–116 the chain is Vesicular; the sequence is VAIVSMVNNNTVYKGNKLVIEQAQFNWDPETV. N93 is a glycosylation site (N-linked (GlcNAc...) asparagine). A helical transmembrane segment spans residues 117–137; that stretch reads GMIHGSFFWGYIVTQIPGGYI. At 138-140 the chain is on the cytoplasmic side; the sequence is CQK. A helical membrane pass occupies residues 141–161; sequence FAANRVFGFAIVATSTLNMLI. Topologically, residues 162 to 168 are vesicular; that stretch reads PSAARVH. Residues 169–189 traverse the membrane as a helical segment; the sequence is FACVICVRILQGLVEGVTYPA. Residues 190–208 are Cytoplasmic-facing; that stretch reads CHGIWSKWAPPLERSRLAT. Residues 209–229 form a helical membrane-spanning segment; it reads TAFCGSYAGAVVAMPLAGVLV. Topologically, residues 230–236 are vesicular; it reads QYSGWSS. The helical transmembrane segment at 237-257 threads the bilayer; it reads VFYVYGSFGITWYMFWILVSY. Residues 258–297 are Cytoplasmic-facing; the sequence is ESPAQHPTISEEERKYIEESIGESTGFMNPMAKFKAPWRK. Residues 298–320 form a helical membrane-spanning segment; that stretch reads FFTSMPVYAIIVANFCRSWTFYL. The Vesicular segment spans residues 321 to 341; sequence LLISQPAYFEEVFGFAISKVG. A helical membrane pass occupies residues 342–362; that stretch reads LLSALPHLVMTIIVPIGGQIA. The Cytoplasmic portion of the chain corresponds to 363–378; that stretch reads DFLRTKRIMSTTNVRK. A helical transmembrane segment spans residues 379–399; that stretch reads MMNCGGFGMEATLLLVVGYSH. At 400–401 the chain is on the vesicular side; the sequence is SR. The helical transmembrane segment at 402-422 threads the bilayer; it reads GVAISFLVLAVGFSGFAISGF. At 423 to 435 the chain is on the cytoplasmic side; it reads NVNHLDIAPRYAS. The helical transmembrane segment at 436–456 threads the bilayer; the sequence is ILMGISNGVGTLSGMVCPLIV. Topologically, residues 457-469 are vesicular; that stretch reads GAMTKHKTREEWQ. A helical transmembrane segment spans residues 470–490; that stretch reads YVFLIASLVHYGGVVFYGIFA. Residues 491 to 576 are Cytoplasmic-facing; the sequence is SGEKQPWAEP…YGTVAERDLS (86 aa). A disordered region spans residues 517–552; it reads ADESEEQTQAHGGYGSYGATQTTSQQNGGWATDWEK. A compositionally biased stretch (polar residues) spans 534-545; that stretch reads GATQTTSQQNGG.

Belongs to the major facilitator superfamily. Sodium/anion cotransporter family. VGLUT subfamily.

It localises to the cytoplasmic vesicle. Its subcellular location is the secretory vesicle. The protein localises to the synaptic vesicle membrane. The protein resides in the cell membrane. It is found in the synapse. It localises to the synaptosome. The catalysed reaction is L-glutamate(out) = L-glutamate(in). The enzyme catalyses chloride(in) = chloride(out). It catalyses the reaction 3 Na(+)(out) + phosphate(out) = 3 Na(+)(in) + phosphate(in). It carries out the reaction phosphate(in) = phosphate(out). The catalysed reaction is K(+)(in) + H(+)(out) = K(+)(out) + H(+)(in). Its activity is regulated as follows. Chloride channel activity is allosterically activated by lumenal H(+) and Cl(-) leading to synaptic vesicles acidification. The L-glutamate transport activity is allosterically activated by lumenal H(+) and Cl(-). The allosteric activation by H(+) efficiently prevents non-vesicular efflux across the plasma membrane, thereby restricting L-glutamate transport activity to acidic membranes such as synaptic vesicles. Functionally, multifunctional transporter that transports L-glutamate as well as multiple ions such as chloride, proton, potassium, sodium and phosphate. At the synaptic vesicle membrane, mainly functions as an uniporter which transports preferentially L-glutamate but also phosphate from the cytoplasm into synaptic vesicles at presynaptic nerve terminals of excitatory neural cells. The L-glutamate or phosphate uniporter activity is electrogenic and is driven by the proton electrochemical gradient, mainly by the electrical gradient established by the vacuolar H(+)-ATPase across the synaptic vesicle membrane. In addition, functions as a chloride channel that allows a chloride permeation through the synaptic vesicle membrane that affects the proton electrochemical gradient and promotes synaptic vesicles acidification. Moreover, may function as a K(+)/H(+) antiport allowing to maintain the electrical gradient and to decrease chemical gradient and therefore sustain vesicular glutamate uptake. The vesicular K(+)/H(+) antiport activity is electroneutral. At the plasma membrane, following exocytosis, functions as a symporter of Na(+) and phosphate from the extracellular space to the cytoplasm allowing synaptic phosphate homeostasis regulation. The symporter activity is driven by an inside negative membrane potential and is electrogenic. Is necessary for synaptic signaling of visual-evoked responses from photoreceptors. In Xenopus laevis (African clawed frog), this protein is Vesicular glutamate transporter 1.